We begin with the raw amino-acid sequence, 237 residues long: CDP-diacylglycerol--serine O-phosphatidyltransferase (237 aa).

A run of 8 helical transmembrane segments spans residues Ile3–Met23, Ile25–Ile45, Val73–Gly93, Ile95–Asn115, Tyr124–Leu144, Phe150–Met170, Trp184–Leu204, and Leu207–Val227.

It belongs to the CDP-alcohol phosphatidyltransferase class-I family.

The protein resides in the cell membrane. The catalysed reaction is a CDP-1,2-diacyl-sn-glycerol + L-serine = a 1,2-diacyl-sn-glycero-3-phospho-L-serine + CMP + H(+). This Helicobacter pylori (strain J99 / ATCC 700824) (Campylobacter pylori J99) protein is CDP-diacylglycerol--serine O-phosphatidyltransferase (pssA).